A 91-amino-acid polypeptide reads, in one-letter code: Small ribosomal subunit protein bS16c (91 aa).

It belongs to the bacterial ribosomal protein bS16 family.

The protein resides in the plastid. It is found in the chloroplast. This is Small ribosomal subunit protein bS16c from Vitis vinifera (Grape).